The sequence spans 561 residues: Arf-GAP domain and FG repeat-containing protein 1 (561 aa).

The Arf-GAP domain maps to 11–135; that stretch reads EKHLKMLRDM…WYVPPEQAKV (125 aa). A C4-type zinc finger spans residues 29–52; that stretch reads CFDCDQRGPTYVNMTVGSFVCTSC. Phosphoserine is present on Ser167. Positions 170–193 are disordered; the sequence is ALHLNKGTPSQSPVVGRSQGQQQE. The segment covering 176–191 has biased composition (polar residues); it reads GTPSQSPVVGRSQGQQ. Thr177 is modified (phosphothreonine). Phosphoserine occurs at positions 181 and 362. Ser367 is a glycosylation site (O-linked (GlcNAc) serine). The interval 413 to 433 is disordered; it reads SAQTQPASSGPAPFGATPSTN.

As to quaternary structure, interacts with FCHO1. Interacts with EPS15R and EPS15. O-glycosylated. As to expression, expressed in the testes (at protein level).

The protein resides in the nucleus. It is found in the cytoplasmic vesicle. Its function is as follows. Required for vesicle docking or fusion during acrosome biogenesis. May play a role in RNA trafficking or localization. This is Arf-GAP domain and FG repeat-containing protein 1 (Agfg1) from Mus musculus (Mouse).